Reading from the N-terminus, the 299-residue chain is Diaminopimelate epimerase (299 aa).

Residues Asn-13, Gln-46, and Asn-66 each contribute to the substrate site. Cys-75 functions as the Proton donor in the catalytic mechanism. Substrate is bound by residues Gly-76–Asn-77, Asn-166, Asn-199, and Glu-217–Arg-218. The active-site Proton acceptor is Cys-226. Residue Gly-227–Thr-228 participates in substrate binding.

The protein belongs to the diaminopimelate epimerase family. As to quaternary structure, homodimer.

It is found in the cytoplasm. It catalyses the reaction (2S,6S)-2,6-diaminopimelate = meso-2,6-diaminopimelate. It participates in amino-acid biosynthesis; L-lysine biosynthesis via DAP pathway; DL-2,6-diaminopimelate from LL-2,6-diaminopimelate: step 1/1. Its function is as follows. Catalyzes the stereoinversion of LL-2,6-diaminopimelate (L,L-DAP) to meso-diaminopimelate (meso-DAP), a precursor of L-lysine and an essential component of the bacterial peptidoglycan. The polypeptide is Diaminopimelate epimerase (Paraburkholderia phytofirmans (strain DSM 17436 / LMG 22146 / PsJN) (Burkholderia phytofirmans)).